The primary structure comprises 279 residues: Energy-coupling factor transporter ATP-binding protein EcfA1 (279 aa).

The ABC transporter domain maps to V6 to G240. Residue G40–S47 coordinates ATP.

This sequence belongs to the ABC transporter superfamily. Energy-coupling factor EcfA family. In terms of assembly, forms a stable energy-coupling factor (ECF) transporter complex composed of 2 membrane-embedded substrate-binding proteins (S component), 2 ATP-binding proteins (A component) and 2 transmembrane proteins (T component).

It localises to the cell membrane. Its function is as follows. ATP-binding (A) component of a common energy-coupling factor (ECF) ABC-transporter complex. Unlike classic ABC transporters this ECF transporter provides the energy necessary to transport a number of different substrates. This chain is Energy-coupling factor transporter ATP-binding protein EcfA1, found in Listeria innocua serovar 6a (strain ATCC BAA-680 / CLIP 11262).